The chain runs to 153 residues: MFTESMLFLLLFLLLGLIAKNNSLIIAVAVVILLKLFHVDGKVMEIIQAKGINWGVTIITVAILIPIATGQIGFKDLIDSFKSAAGWIGLGAGIAVSILAKKGVGYMAVDPQVTVSLVFGTILAVVLFRGIAAGPVIAAGIAYMAMQLVAFIK.

The next 4 helical transmembrane spans lie at 6–26 (MLFL…SLII), 54–74 (WGVT…QIGF), 80–100 (SFKS…SILA), and 117–137 (LVFG…GPVI).

Belongs to the UPF0756 family.

The protein localises to the cell membrane. The chain is UPF0756 membrane protein lmo1568 from Listeria monocytogenes serovar 1/2a (strain ATCC BAA-679 / EGD-e).